Consider the following 266-residue polypeptide: Tryptophan synthase alpha chain (266 aa).

Catalysis depends on proton acceptor residues glutamate 52 and aspartate 63.

The protein belongs to the TrpA family. Tetramer of two alpha and two beta chains.

The enzyme catalyses (1S,2R)-1-C-(indol-3-yl)glycerol 3-phosphate + L-serine = D-glyceraldehyde 3-phosphate + L-tryptophan + H2O. It participates in amino-acid biosynthesis; L-tryptophan biosynthesis; L-tryptophan from chorismate: step 5/5. Its function is as follows. The alpha subunit is responsible for the aldol cleavage of indoleglycerol phosphate to indole and glyceraldehyde 3-phosphate. The polypeptide is Tryptophan synthase alpha chain (Nocardia farcinica (strain IFM 10152)).